The primary structure comprises 246 residues: rRNA methyltransferase 2, mitochondrial (246 aa).

The N-terminal 18 residues, 1–18, are a transit peptide targeting the mitochondrion; sequence MAGYLKLVCVSFQRQGFH. Residues 83–86, Asp112, 129–130, and Asp154 contribute to the S-adenosyl-L-methionine site; these read PGAW and DV. The active-site Proton acceptor is Lys194.

The protein belongs to the class I-like SAM-binding methyltransferase superfamily. RNA methyltransferase RlmE family. As to expression, widely expressed, with highest expression in muscle, placenta, and heart.

The protein resides in the mitochondrion. The catalysed reaction is uridine(1369) in 16S rRNA + S-adenosyl-L-methionine = 2'-O-methyluridine(1369) in 16S rRNA + S-adenosyl-L-homocysteine + H(+). S-adenosyl-L-methionine-dependent 2'-O-ribose methyltransferase that catalyzes the formation of 2'-O-methyluridine at position 1369 (Um1369) in the 16S mitochondrial large subunit ribosomal RNA (mtLSU rRNA), a universally conserved modification in the peptidyl transferase domain of the mtLSU rRNA. This activity may require prior 2'-O-methylguanosine modification at position 1370 (Gm1370) by MRM3. Essential for late-stage assembly of mtLSU required for efficient translation of mitochondrial DNA encoded proteins; methyltransferase activity is not required for this function. Essential for mitochondrial respiratory function. The sequence is that of rRNA methyltransferase 2, mitochondrial from Homo sapiens (Human).